Here is a 628-residue protein sequence, read N- to C-terminus: Keratin, type II cytoskeletal 3 (628 aa).

The interval Met1–Ala21 is disordered. Residues Met1–Gln197 are head. Residues Ser13 and Ser56 each carry the phosphoserine modification. Residues Glu198 to Leu233 are coil 1A. One can recognise an IF rod domain in the interval Glu198 to Met513. The segment at Gln234–His254 is linker 1. The segment at Ile255–Met346 is coil 1B. Lys296 is modified (N6,N6-dimethyllysine). Residues Gln347 to Ile370 form a linker 12 region. Ser364 is modified (phosphoserine). The segment at Ile371–Glu509 is coil 2. Residues Glu510–Arg628 form a tail region. The segment at Ser605–Arg628 is disordered. A compositionally biased stretch (low complexity) spans Ser617 to Arg628.

The protein belongs to the intermediate filament family. Heterotetramer of two type I and two type II keratins. Keratin-3 associates with keratin-12. As to expression, cornea specific.

This is Keratin, type II cytoskeletal 3 (KRT3) from Homo sapiens (Human).